The following is a 182-amino-acid chain: Ribosome maturation factor RimM (182 aa).

The 81-residue stretch at 102–182 folds into the PRC barrel domain; sequence EEGDYYWKDL…SIEVDWDPGF (81 aa).

It belongs to the RimM family. In terms of assembly, binds ribosomal protein uS19.

The protein resides in the cytoplasm. Its function is as follows. An accessory protein needed during the final step in the assembly of 30S ribosomal subunit, possibly for assembly of the head region. Essential for efficient processing of 16S rRNA. May be needed both before and after RbfA during the maturation of 16S rRNA. It has affinity for free ribosomal 30S subunits but not for 70S ribosomes. The protein is Ribosome maturation factor RimM of Escherichia fergusonii (strain ATCC 35469 / DSM 13698 / CCUG 18766 / IAM 14443 / JCM 21226 / LMG 7866 / NBRC 102419 / NCTC 12128 / CDC 0568-73).